Reading from the N-terminus, the 204-residue chain is uncharacterized protein (204 aa).

A signal peptide spans 1–21 (MIKKFLLFAMLNIFLTNKAHS).

This is an uncharacterized protein from Borreliella burgdorferi (strain ATCC 35210 / DSM 4680 / CIP 102532 / B31) (Borrelia burgdorferi).